The following is a 279-amino-acid chain: Undecaprenyl-diphosphatase (279 aa).

8 consecutive transmembrane segments (helical) span residues 1–21 (MVLE…LPIS), 39–59 (GRFF…LYFF), 96–116 (LLLV…VRFV), 128–148 (FTMG…DALF), 155–175 (IFQI…FAII), 201–221 (FSFL…LVAG), 231–251 (YSLI…SALL), and 259–279 (FVLF…VSFF).

The protein belongs to the UppP family.

The protein localises to the cell membrane. The catalysed reaction is di-trans,octa-cis-undecaprenyl diphosphate + H2O = di-trans,octa-cis-undecaprenyl phosphate + phosphate + H(+). Its function is as follows. Catalyzes the dephosphorylation of undecaprenyl diphosphate (UPP). Confers resistance to bacitracin. This Tropheryma whipplei (strain TW08/27) (Whipple's bacillus) protein is Undecaprenyl-diphosphatase.